A 525-amino-acid chain; its full sequence is Cytochrome P450 monooxygenase ltmJ (525 aa).

A helical membrane pass occupies residues 21 to 43; that stretch reads LTWWQTIVSFIIFCIMCSWLPGN. N-linked (GlcNAc...) asparagine glycosylation occurs at Asn136. Cys465 serves as a coordination point for heme.

This sequence belongs to the cytochrome P450 family. It depends on heme as a cofactor.

The protein localises to the membrane. It functions in the pathway secondary metabolite biosynthesis. Cytochrome P450 monooxygenase; part of the gene clusters that mediates the biosynthesis of lolitrems, indole-diterpene mycotoxins that are potent tremorgens in mammals, and are synthesized by clavicipitaceous fungal endophytes in association with their grass hosts. The geranylgeranyl diphosphate (GGPP) synthase ltmG is proposed to catalyze the first step in lolitrem biosynthesis. LtmG catalyzes a series of iterative condensations of isopentenyl diphosphate (IPP) with dimethylallyl diphosphate (DMAPP), geranyl diphosphate (GPP), and farnesyl diphosphate (FPP), to form GGPP. GGPP then condenses with indole-3-glycerol phosphate to form 3-geranylgeranylindole, an acyclic intermediate, to be incorporated into paxilline. Either ltmG or ltmC could be responsible for this step, as both are putative prenyl transferases. The FAD-dependent monooxygenase ltmM then catalyzes the epoxidation of the two terminal alkenes of the geranylgeranyl moiety, which is subsequently cyclized by ltmB, to paspaline. The cytochrome P450 monooxygenases ltmQ and ltmP can sequentially oxidize paspaline to terpendole E and terpendole F. Alternatively, ltmP converts paspaline to an intermediate which is oxidized by ltmQ to terpendole F. LtmF, ltmK, ltmE and ltmJ appear to be unique to the epichloe endophytes. The prenyltransferase ltmF is involved in the 27-hydroxyl-O-prenylation. The cytochrome P450 monooxygenase ltmK is required for the oxidative acetal ring formation. The multi-functional prenyltransferase ltmE is required for C20- and C21-prenylations of the indole ring of paspalanes and acts together with the cytochrome P450 monooxygenase ltmJ to yield lolitremanes by multiple oxidations and ring closures. The stereoisomer pairs of lolitriol and lolitrem N or lolitrem B and lolitrem F may be attributed to variations in the way in which ring closure can occur under the action of ltmJ. While the major product of this pathway is lolitrem B, the prenyl transferases and cytochrome P450 monooxygenases identified in this pathway have a remarkable versatility in their regio- and stereo-specificities to generate a diverse range of metabolites that are products of a metabolic grid rather than a linear pathway. The polypeptide is Cytochrome P450 monooxygenase ltmJ (ltmJ) (Epichloe festucae var. lolii (Neotyphodium lolii)).